The sequence spans 396 residues: Acetate kinase (396 aa).

N7 is a Mg(2+) binding site. K14 is a binding site for ATP. R88 contributes to the substrate binding site. The active-site Proton donor/acceptor is the D145. Residues H205–G209, D279–R281, and G327–N331 contribute to the ATP site. E381 lines the Mg(2+) pocket.

It belongs to the acetokinase family. Homodimer. Mg(2+) is required as a cofactor. The cofactor is Mn(2+).

It is found in the cytoplasm. The enzyme catalyses acetate + ATP = acetyl phosphate + ADP. Its pathway is metabolic intermediate biosynthesis; acetyl-CoA biosynthesis; acetyl-CoA from acetate: step 1/2. Functionally, catalyzes the formation of acetyl phosphate from acetate and ATP. Can also catalyze the reverse reaction. The chain is Acetate kinase from Campylobacter jejuni subsp. jejuni serotype O:23/36 (strain 81-176).